The sequence spans 279 residues: Acetyl-coenzyme A carboxylase carboxyl transferase subunit beta (279 aa).

In terms of domain architecture, CoA carboxyltransferase N-terminal spans 27-279 (LFLACPYCGT…IVKLHHRTEI (253 aa)). Positions 31, 34, 49, and 52 each coordinate Zn(2+). Residues 31–52 (CPYCGTQMYNKQLGDYRVCAKC) form a C4-type zinc finger.

Belongs to the AccD/PCCB family. In terms of assembly, acetyl-CoA carboxylase is a heterohexamer composed of biotin carboxyl carrier protein (AccB), biotin carboxylase (AccC) and two subunits each of ACCase subunit alpha (AccA) and ACCase subunit beta (AccD). The cofactor is Zn(2+).

It is found in the cytoplasm. The catalysed reaction is N(6)-carboxybiotinyl-L-lysyl-[protein] + acetyl-CoA = N(6)-biotinyl-L-lysyl-[protein] + malonyl-CoA. The protein operates within lipid metabolism; malonyl-CoA biosynthesis; malonyl-CoA from acetyl-CoA: step 1/1. Its function is as follows. Component of the acetyl coenzyme A carboxylase (ACC) complex. Biotin carboxylase (BC) catalyzes the carboxylation of biotin on its carrier protein (BCCP) and then the CO(2) group is transferred by the transcarboxylase to acetyl-CoA to form malonyl-CoA. The chain is Acetyl-coenzyme A carboxylase carboxyl transferase subunit beta from Leuconostoc citreum (strain KM20).